We begin with the raw amino-acid sequence, 504 residues long: MGVFRFISISLAAVSAANAAQILSMPHAQTVPNSYIVMMKDDTSDDDFKHHQSWLQSTHTHNITRRATIQNAGMRHKYNFNKMKGYSGIFDDETIKDIAKDPKVMFVEPDTIVSVHGKVEQSNVPSWGLARISNPQPGADSYTYDSSAGEGITVYSVDTGVDVNHEDFEGRAIWGSNQVNDGDDRDGSGHGTHTSGTMVGKMYGIAKKAKLVAVKVLGNDGSGPTSGIVAGINWSVEHARQNGGTKKAVMNMSLGGSSSSALNRAAAQAVEQGMFLSVAAGNDNQDAQSSSPASEPSVCTVGSSAEDDSRSSFSNWGPAIDIFAPGSNIVSARPGGGSQSMSGTSMAAPHVAGLAAYLMALEGISGGAVCDRLKELGTSSITDAGPGTPTNVLINNGGAKGGQPNPNPAPAPSPSQPSEPQQPTPSQPGQPGEPFPGEPFPGEPFPGQPFPGESAPAPAPAPMPPTPQHPHTPYPGGDNFDFDSFWKKYFGGEHWRKMFSSFWN.

An N-terminal signal peptide occupies residues 1 to 19 (MGVFRFISISLAAVSAANA). A propeptide spanning residues 20–116 (AQILSMPHAQ…VEPDTIVSVH (97 aa)) is cleaved from the precursor. Residues 34–116 (SYIVMMKDDT…VEPDTIVSVH (83 aa)) enclose the Inhibitor I9 domain. Residues 126 to 400 (SWGLARISNP…NVLINNGGAK (275 aa)) enclose the Peptidase S8 domain. Catalysis depends on charge relay system residues D158 and H190. Residues 172–198 (AIWGSNQVNDGDDRDGSGHGTHTSGTM) form a disordered region. Residues N233 and N251 are each glycosylated (N-linked (GlcNAc...) asparagine). Residues 282-294 (NDNQDAQSSSPAS) show a composition bias toward polar residues. Residues 282–312 (NDNQDAQSSSPASEPSVCTVGSSAEDDSRSS) are disordered. S345 functions as the Charge relay system in the catalytic mechanism. The segment covering 378-394 (TSSITDAGPGTPTNVLI) has biased composition (polar residues). Positions 378 to 483 (TSSITDAGPG…YPGGDNFDFD (106 aa)) are disordered. Composition is skewed to pro residues over residues 405 to 449 (NPNP…PGQP) and 457 to 473 (APAP…PHTP).

This sequence belongs to the peptidase S8 family.

The protein resides in the secreted. Its function is as follows. Secreted subtilisin-like serine protease with keratinolytic activity that contributes to pathogenicity. This Trichophyton rubrum (Athlete's foot fungus) protein is Subtilisin-like protease 1 (SUB1).